Reading from the N-terminus, the 102-residue chain is Apolipoprotein A-II (102 aa).

The N-terminal stretch at 1-18 (MKLLAMVALLVTICSLEG) is a signal peptide. At Met-49 the chain carries Methionine sulfoxide.

This sequence belongs to the apolipoprotein A2 family. Monomer. Interacts with NAXE and NDRG1. Plasma.

The protein localises to the secreted. Functionally, may stabilize HDL (high density lipoprotein) structure by its association with lipids, and affect the HDL metabolism. This is Apolipoprotein A-II (Apoa2) from Rattus norvegicus (Rat).